Here is a 90-residue protein sequence, read N- to C-terminus: RNA-binding protein Hfq (90 aa).

The 61-residue stretch at 9–69 folds into the Sm domain; the sequence is DRFLNHLRVN…ISTIIPSSYV (61 aa).

It belongs to the Hfq family. Homohexamer.

In terms of biological role, RNA chaperone that binds small regulatory RNA (sRNAs) and mRNAs to facilitate mRNA translational regulation in response to envelope stress, environmental stress and changes in metabolite concentrations. Also binds with high specificity to tRNAs. This chain is RNA-binding protein Hfq, found in Thermotoga petrophila (strain ATCC BAA-488 / DSM 13995 / JCM 10881 / RKU-1).